The chain runs to 583 residues: 2-succinyl-5-enolpyruvyl-6-hydroxy-3-cyclohexene-1-carboxylate synthase (583 aa).

It belongs to the TPP enzyme family. MenD subfamily. Homodimer. Mg(2+) serves as cofactor. It depends on Mn(2+) as a cofactor. Thiamine diphosphate is required as a cofactor.

The catalysed reaction is isochorismate + 2-oxoglutarate + H(+) = 5-enolpyruvoyl-6-hydroxy-2-succinyl-cyclohex-3-ene-1-carboxylate + CO2. It functions in the pathway quinol/quinone metabolism; 1,4-dihydroxy-2-naphthoate biosynthesis; 1,4-dihydroxy-2-naphthoate from chorismate: step 2/7. It participates in quinol/quinone metabolism; menaquinone biosynthesis. Functionally, catalyzes the thiamine diphosphate-dependent decarboxylation of 2-oxoglutarate and the subsequent addition of the resulting succinic semialdehyde-thiamine pyrophosphate anion to isochorismate to yield 2-succinyl-5-enolpyruvyl-6-hydroxy-3-cyclohexene-1-carboxylate (SEPHCHC). This chain is 2-succinyl-5-enolpyruvyl-6-hydroxy-3-cyclohexene-1-carboxylate synthase, found in Chlorobium luteolum (strain DSM 273 / BCRC 81028 / 2530) (Pelodictyon luteolum).